Consider the following 250-residue polypeptide: Small ribosomal subunit protein uS3 (250 aa).

The 69-residue stretch at 39-107 (VREFLTKNLK…PAQVSINEID (69 aa)) folds into the KH type-2 domain. A disordered region spans residues 215-250 (MNPAPAEERPAKRGRGRGEGQERRGRRGDRAADKGE). The span at 220–250 (AEERPAKRGRGRGEGQERRGRRGDRAADKGE) shows a compositional bias: basic and acidic residues.

It belongs to the universal ribosomal protein uS3 family. Part of the 30S ribosomal subunit. Forms a tight complex with proteins S10 and S14.

In terms of biological role, binds the lower part of the 30S subunit head. Binds mRNA in the 70S ribosome, positioning it for translation. In Acinetobacter baumannii (strain AB0057), this protein is Small ribosomal subunit protein uS3.